Here is a 162-residue protein sequence, read N- to C-terminus: Nitric oxide synthase, inducible (162 aa).

Over residues L24 to P37 the composition is skewed to polar residues. Positions L24–V65 are disordered. Zn(2+) contacts are provided by C90 and C95. A (6R)-L-erythro-5,6,7,8-tetrahydrobiopterin-binding site is contributed by S98. Position 132 (E132) interacts with L-arginine. H160 is a binding site for FAD.

It belongs to the NOS family. Homodimer. Interacts with NHERF1. Interacts with GAPDH; induced by oxidatively-modified low-densitity lipoprotein (LDL(ox)). Interacts with S100A8 and S100A9 to form the iNOS-S100A8/9 transnitrosylase complex. Interacts with SPSB1, SPSB2 and SPSB4. Interacts with ELOC and CUL5 in the presence of SPSB1 or SPSB2 or SPSB4. Forms a complex with ASL, ASS1 and HSP90AA1; the complex regulates cell-autonomous L-arginine synthesis and citrulline recycling while channeling extracellular L-arginine to nitric oxide synthesis pathway. It depends on heme b as a cofactor. The cofactor is FAD. Requires FMN as cofactor. (6R)-L-erythro-5,6,7,8-tetrahydrobiopterin is required as a cofactor. Post-translationally, polyubiquitinated; mediated by SPSB1, SPSB2 and SPSB4, leading to proteasomal degradation.

The protein resides in the cytoplasm. It is found in the cytosol. The enzyme catalyses 2 L-arginine + 3 NADPH + 4 O2 + H(+) = 2 L-citrulline + 2 nitric oxide + 3 NADP(+) + 4 H2O. Regulated by calcium/calmodulin. Functionally, produces nitric oxide (NO) which is a messenger molecule with diverse functions throughout the body. In macrophages, NO mediates tumoricidal and bactericidal actions. Also has nitrosylase activity and mediates cysteine S-nitrosylation of cytoplasmic target proteins such PTGS2/COX2. As component of the iNOS-S100A8/9 transnitrosylase complex involved in the selective inflammatory stimulus-dependent S-nitrosylation of GAPDH implicated in regulation of the GAIT complex activity and probably multiple targets including ANXA5, EZR, MSN and VIM. Involved in inflammation, enhances the synthesis of pro-inflammatory mediators such as IL6 and IL8. The sequence is that of Nitric oxide synthase, inducible (NOS2) from Macaca mulatta (Rhesus macaque).